Reading from the N-terminus, the 704-residue chain is Elongation factor G (704 aa).

Positions 8–290 (ARYRNIGISA…AVIDYLPAPT (283 aa)) constitute a tr-type G domain. Residues 17–24 (AHIDAGKT), 88–92 (DTPGH), and 142–145 (NKMD) contribute to the GTP site.

This sequence belongs to the TRAFAC class translation factor GTPase superfamily. Classic translation factor GTPase family. EF-G/EF-2 subfamily.

The protein localises to the cytoplasm. Its function is as follows. Catalyzes the GTP-dependent ribosomal translocation step during translation elongation. During this step, the ribosome changes from the pre-translocational (PRE) to the post-translocational (POST) state as the newly formed A-site-bound peptidyl-tRNA and P-site-bound deacylated tRNA move to the P and E sites, respectively. Catalyzes the coordinated movement of the two tRNA molecules, the mRNA and conformational changes in the ribosome. This Pectobacterium atrosepticum (strain SCRI 1043 / ATCC BAA-672) (Erwinia carotovora subsp. atroseptica) protein is Elongation factor G.